We begin with the raw amino-acid sequence, 312 residues long: Methionyl-tRNA formyltransferase (312 aa).

113-116 (SLLP) lines the (6S)-5,6,7,8-tetrahydrofolate pocket.

Belongs to the Fmt family.

It carries out the reaction L-methionyl-tRNA(fMet) + (6R)-10-formyltetrahydrofolate = N-formyl-L-methionyl-tRNA(fMet) + (6S)-5,6,7,8-tetrahydrofolate + H(+). Functionally, attaches a formyl group to the free amino group of methionyl-tRNA(fMet). The formyl group appears to play a dual role in the initiator identity of N-formylmethionyl-tRNA by promoting its recognition by IF2 and preventing the misappropriation of this tRNA by the elongation apparatus. The protein is Methionyl-tRNA formyltransferase of Francisella philomiragia subsp. philomiragia (strain ATCC 25017 / CCUG 19701 / FSC 153 / O#319-036).